The following is a 248-amino-acid chain: Probable capsular polysaccharide biosynthesis protein YwqC (248 aa).

Transmembrane regions (helical) follow at residues 18–38 (ILLIMIVTAAATAAGGLISFF) and 174–194 (LLNIAIAFAAGLAGSIGLAFL).

Belongs to the CpsC/CapA family. In terms of processing, not phosphorylated in vitro by YwqD.

The protein localises to the cell membrane. Its pathway is capsule biogenesis; capsule polysaccharide biosynthesis. Required for YwqD kinase activity. May bring YwqD and its substrates into contact. Probably involved in the regulation of capsular polysaccharide biosynthesis. In Bacillus subtilis (strain 168), this protein is Probable capsular polysaccharide biosynthesis protein YwqC (ywqC).